A 242-amino-acid chain; its full sequence is MSTNPKPAFRRILLKLSGEALMGDEGFGIDPKVLDRMAQEVKELVELGIQVGVVIGGGNLFRGEGLAKAGMNRVVGDHMGMLATVMNGLAMRDALHRAYVNARLMSAIPLKGVCDDYNWAEAISLLKSGRVVIFAAGTGNPFCTTDSAACLRGIEIEAEVVLKGTKVDGVYSDDPMKNPEAVKYDELSYTEVLDKELKVMDLAAFTMARDHDMPILVFNMNKPGALRRVVMGEEEGTMIRAK.

15 to 18 (KLSG) contributes to the ATP binding site. The segment at 23–28 (GDEGFG) is involved in allosteric activation by GTP. A UMP-binding site is contributed by G57. Positions 58 and 62 each coordinate ATP. UMP contacts are provided by residues D77 and 138 to 145 (TGNPFCTT). ATP contacts are provided by T165, Y171, and D174.

Belongs to the UMP kinase family. Homohexamer.

It is found in the cytoplasm. The enzyme catalyses UMP + ATP = UDP + ADP. Its pathway is pyrimidine metabolism; CTP biosynthesis via de novo pathway; UDP from UMP (UMPK route): step 1/1. Its activity is regulated as follows. Allosterically activated by GTP. Inhibited by UTP. Functionally, catalyzes the reversible phosphorylation of UMP to UDP. This Shewanella sp. (strain MR-4) protein is Uridylate kinase.